Reading from the N-terminus, the 556-residue chain is Formate--tetrahydrofolate ligase (556 aa).

Residue 65-72 participates in ATP binding; it reads TPAGEGKS.

The protein belongs to the formate--tetrahydrofolate ligase family.

The catalysed reaction is (6S)-5,6,7,8-tetrahydrofolate + formate + ATP = (6R)-10-formyltetrahydrofolate + ADP + phosphate. It participates in one-carbon metabolism; tetrahydrofolate interconversion. In Streptococcus pneumoniae (strain JJA), this protein is Formate--tetrahydrofolate ligase.